The primary structure comprises 66 residues: Large ribosomal subunit protein bL33c (66 aa).

The protein belongs to the bacterial ribosomal protein bL33 family.

The protein localises to the plastid. Its subcellular location is the chloroplast. This Cucumis sativus (Cucumber) protein is Large ribosomal subunit protein bL33c.